The chain runs to 77 residues: Probable small nuclear ribonucleoprotein G (77 aa).

The Sm domain occupies 4–76; the sequence is THPPELKKYM…VVIMEPKERI (73 aa).

This sequence belongs to the snRNP Sm proteins family. Core component of the spliceosomal U1, U2, U4 and U5 small nuclear ribonucleoproteins (snRNPs), the building blocks of the spliceosome.

It is found in the cytoplasm. Its subcellular location is the cytosol. The protein resides in the nucleus. Its function is as follows. Plays a role in pre-mRNA splicing as a core component of the spliceosomal U1, U2, U4 and U5 small nuclear ribonucleoproteins (snRNPs), the building blocks of the spliceosome. The chain is Probable small nuclear ribonucleoprotein G (snr-7) from Caenorhabditis elegans.